Consider the following 345-residue polypeptide: Phosphoribosylformylglycinamidine cyclo-ligase (345 aa).

The protein belongs to the AIR synthase family.

The protein resides in the cytoplasm. The enzyme catalyses 2-formamido-N(1)-(5-O-phospho-beta-D-ribosyl)acetamidine + ATP = 5-amino-1-(5-phospho-beta-D-ribosyl)imidazole + ADP + phosphate + H(+). Its pathway is purine metabolism; IMP biosynthesis via de novo pathway; 5-amino-1-(5-phospho-D-ribosyl)imidazole from N(2)-formyl-N(1)-(5-phospho-D-ribosyl)glycinamide: step 2/2. The sequence is that of Phosphoribosylformylglycinamidine cyclo-ligase from Actinobacillus pleuropneumoniae serotype 5b (strain L20).